The chain runs to 158 residues: NAD(P)H-quinone oxidoreductase subunit N (158 aa).

The protein belongs to the complex I NdhN subunit family. NDH-1 can be composed of about 15 different subunits; different subcomplexes with different compositions have been identified which probably have different functions.

It is found in the cellular thylakoid membrane. The catalysed reaction is a plastoquinone + NADH + (n+1) H(+)(in) = a plastoquinol + NAD(+) + n H(+)(out). The enzyme catalyses a plastoquinone + NADPH + (n+1) H(+)(in) = a plastoquinol + NADP(+) + n H(+)(out). Functionally, NDH-1 shuttles electrons from an unknown electron donor, via FMN and iron-sulfur (Fe-S) centers, to quinones in the respiratory and/or the photosynthetic chain. The immediate electron acceptor for the enzyme in this species is believed to be plastoquinone. Couples the redox reaction to proton translocation, and thus conserves the redox energy in a proton gradient. Cyanobacterial NDH-1 also plays a role in inorganic carbon-concentration. The chain is NAD(P)H-quinone oxidoreductase subunit N from Prochlorococcus marinus (strain MIT 9312).